The primary structure comprises 86 residues: Palustrin-3b (86 aa).

Residues 1–22 (MFTLKKPLLLIVLLGIISLSLC) form the signal peptide. Residues 23 to 36 (EQERNADEDEESEI) constitute a propeptide that is removed on maturation. Cysteines 81 and 86 form a disulfide.

As to expression, expressed by the skin glands.

It is found in the secreted. In terms of biological role, antimicrobial peptide. The sequence is that of Palustrin-3b from Odorrana versabilis (Chinese bamboo leaf odorous frog).